The primary structure comprises 337 residues: MSEEKSVLRDLNLKNDDELMLRPQTLNQYIGQDDIKEMLSIYIQAALKREESLDHVLLYGAPGLGKTTLAQIIANELGVDIKITSGPAIEKTGDLVALLSSLSPGDVLFIDEIHRIPRFVEEVLYSAMEDYTLDIVLDKERDSRSIRIELPPFTLIGATTRFGDLSHPLRERFGAVFRLSYYKLEEIKQIVRRTSKVYQNEIDEKAVDELSKRSRGTPRIANRLFRRVRDFAEIMTDAVITLDITQLALTKLGIDHKGLDASDYLYLRGIVERFNGGPVGLESLASTIGEEPGTIEDVYEPYLLQEGYIKRTPRGRVATELAYNLLGVKYYKGLLDN.

A large ATPase domain (RuvB-L) region spans residues 1-182; that stretch reads MSEEKSVLRD…FGAVFRLSYY (182 aa). Residues Leu21, Arg22, Gly63, Lys66, Thr67, Thr68, 129-131, Arg172, Tyr182, and Arg219 each bind ATP; that span reads EDY. Thr67 contributes to the Mg(2+) binding site. The segment at 183–253 is small ATPAse domain (RuvB-S); sequence KLEEIKQIVR…ITQLALTKLG (71 aa). The segment at 256-337 is head domain (RuvB-H); sequence HKGLDASDYL…VKYYKGLLDN (82 aa). Residues Arg311 and Arg316 each contribute to the DNA site.

This sequence belongs to the RuvB family. As to quaternary structure, homohexamer. Forms an RuvA(8)-RuvB(12)-Holliday junction (HJ) complex. HJ DNA is sandwiched between 2 RuvA tetramers; dsDNA enters through RuvA and exits via RuvB. An RuvB hexamer assembles on each DNA strand where it exits the tetramer. Each RuvB hexamer is contacted by two RuvA subunits (via domain III) on 2 adjacent RuvB subunits; this complex drives branch migration. In the full resolvosome a probable DNA-RuvA(4)-RuvB(12)-RuvC(2) complex forms which resolves the HJ.

Its subcellular location is the cytoplasm. It carries out the reaction ATP + H2O = ADP + phosphate + H(+). Functionally, the RuvA-RuvB-RuvC complex processes Holliday junction (HJ) DNA during genetic recombination and DNA repair, while the RuvA-RuvB complex plays an important role in the rescue of blocked DNA replication forks via replication fork reversal (RFR). RuvA specifically binds to HJ cruciform DNA, conferring on it an open structure. The RuvB hexamer acts as an ATP-dependent pump, pulling dsDNA into and through the RuvAB complex. RuvB forms 2 homohexamers on either side of HJ DNA bound by 1 or 2 RuvA tetramers; 4 subunits per hexamer contact DNA at a time. Coordinated motions by a converter formed by DNA-disengaged RuvB subunits stimulates ATP hydrolysis and nucleotide exchange. Immobilization of the converter enables RuvB to convert the ATP-contained energy into a lever motion, pulling 2 nucleotides of DNA out of the RuvA tetramer per ATP hydrolyzed, thus driving DNA branch migration. The RuvB motors rotate together with the DNA substrate, which together with the progressing nucleotide cycle form the mechanistic basis for DNA recombination by continuous HJ branch migration. Branch migration allows RuvC to scan DNA until it finds its consensus sequence, where it cleaves and resolves cruciform DNA. The chain is Holliday junction branch migration complex subunit RuvB from Acholeplasma laidlawii (strain PG-8A).